The primary structure comprises 116 residues: Guanylin (116 aa).

A signal peptide spans 1–23; the sequence is MNACVLSVLCLLGALAVLVEGVT. Residues 24–101 constitute a propeptide that is removed on maturation; the sequence is VQDGDLSFPL…LQRLEAIAQD (78 aa). 3 disulfide bridges follow: C69–C83, C105–C113, and C108–C116.

It belongs to the guanylin family. As to expression, localized in both crypts and villi in the small intestine and to superficial epithelial cells in the colon.

The protein localises to the secreted. In terms of biological role, endogenous activator of intestinal guanylate cyclase. It stimulates this enzyme through the same receptor binding region as the heat-stable enterotoxins. In Mus musculus (Mouse), this protein is Guanylin (Guca2a).